A 243-amino-acid chain; its full sequence is DNA repair protein RecO (243 aa).

The protein belongs to the RecO family.

Its function is as follows. Involved in DNA repair and RecF pathway recombination. The sequence is that of DNA repair protein RecO from Frankia casuarinae (strain DSM 45818 / CECT 9043 / HFP020203 / CcI3).